The following is a 192-amino-acid chain: Early nodulin-like protein 7 (192 aa).

Positions 1 to 27 (MMMMMMRSTCNLTLMLCICALVVASMA) are cleaved as a signal peptide. The Phytocyanin domain maps to 32–134 (RDFKVGDEFG…GQRLIVEVMH (103 aa)). N48, N89, and N101 each carry an N-linked (GlcNAc...) asparagine glycan. A disulfide bond links C88 and C122. Residue S166 is the site of GPI-anchor amidated serine attachment. The propeptide at 167–192 (AASSLPTACLLIPLFLTIASFRFISY) is removed in mature form.

It belongs to the early nodulin-like (ENODL) family. In terms of tissue distribution, mostly expressed in flowers, and, to a lower extent, in seeds, but barely in seedlings, stems, leaves and roots.

It is found in the cell membrane. In terms of biological role, may act as a carbohydrate transporter. The chain is Early nodulin-like protein 7 from Arabidopsis thaliana (Mouse-ear cress).